Reading from the N-terminus, the 196-residue chain is MDLQKLHELIKNCDKCPLHKYRKNAVPGEGEMKLGVMIVGEAPGASEDEAGRPFVGAAGQLLTEALSRLGVRRGDVFITNVVKCRPPNNRTPNREEVEACLPYLIQQIGILKPRRIIALGLISAKALMELMGRRAEKLGDVKGKCYQGRIAGVQVELCITYHPAAVLRKPALRGEFQKDLAMFFGGGLDRFLDPSK.

The [4Fe-4S] cluster site is built by C13 and C16. Uracil-binding positions include G40 to A42, F54, and N80. Residues C84 and C100 each contribute to the [4Fe-4S] cluster site. Residue H162 coordinates uracil.

This sequence belongs to the uracil-DNA glycosylase (UDG) superfamily. Type 4 (UDGa) family.

It catalyses the reaction Hydrolyzes single-stranded DNA or mismatched double-stranded DNA and polynucleotides, releasing free uracil.. Functionally, removes uracil bases that are present in DNA as a result of either deamination of cytosine or misincorporation of dUMP instead of dTMP. Can remove uracil from double-stranded DNA containing either a U/G or U/A base pair as well as from single-stranded DNA. This is Type-4 uracil-DNA glycosylase from Pyrobaculum aerophilum (strain ATCC 51768 / DSM 7523 / JCM 9630 / CIP 104966 / NBRC 100827 / IM2).